Reading from the N-terminus, the 227-residue chain is MRYLIATAVLVAVVLVGWPAAGAPPSCAGLGGTVQAGQICHVHASGPKYMLDMTFPVDYPDQQALTDYITQNRDGFVNVAQGSPLRDQPYQMDATSEQHSSGQPPQATRSVVLKFFQDLGGAHPSTWYKAFNYNLATSQPITFDTLFVPGTTPLDSIYPIVQRELARQTGFGAAILPSTGLDPAHYQNFAITDDSLIFYFAQGELLPSFVGACQAQVPRSAIPPLAI.

The helical transmembrane segment at Tyr-3 to Ala-23 threads the bilayer.

The protein belongs to the RsiV family.

It localises to the cell membrane. Its subcellular location is the secreted. The protein resides in the cell wall. The enzyme catalyses a fatty acid ester + H2O = an aliphatic alcohol + a fatty acid + H(+). It carries out the reaction an acetyl ester + H2O = an aliphatic alcohol + acetate + H(+). It catalyses the reaction a butanoate ester + H2O = an aliphatic alcohol + butanoate + H(+). The catalysed reaction is a hexanoate ester + H2O = an aliphatic alcohol + hexanoate + H(+). The enzyme catalyses a dodecanoate ester + H2O = an aliphatic alcohol + dodecanoate + H(+). It carries out the reaction a tetradecanoate ester + H2O = an aliphatic alcohol + tetradecanoate + H(+). It catalyses the reaction an octanoate ester + H2O = an aliphatic alcohol + octanoate + H(+). Hydrolyzes ester substrates carbon chain lengths ranging from C2 to C14. In vitro, acetate (C2), butyrate (C4) and caprylate (C6) are hydrolyzed with high efficiency. Has lower activity against laurate (C12), myristate (C14) and caproate (C8), and weak activity against palmitate (C16). The protein is Esterase Rv3036c of Mycobacterium tuberculosis (strain ATCC 25618 / H37Rv).